A 359-amino-acid chain; its full sequence is Phosphate acyltransferase (359 aa).

Belongs to the PlsX family. In terms of assembly, homodimer. Probably interacts with PlsY.

Its subcellular location is the cytoplasm. It catalyses the reaction a fatty acyl-[ACP] + phosphate = an acyl phosphate + holo-[ACP]. It functions in the pathway lipid metabolism; phospholipid metabolism. Functionally, catalyzes the reversible formation of acyl-phosphate (acyl-PO(4)) from acyl-[acyl-carrier-protein] (acyl-ACP). This enzyme utilizes acyl-ACP as fatty acyl donor, but not acyl-CoA. This Koribacter versatilis (strain Ellin345) protein is Phosphate acyltransferase.